The primary structure comprises 565 residues: Membrane protein insertase YidC (565 aa).

The next 6 membrane-spanning stretches (helical) occupy residues 6–26, 348–368, 370–390, 437–457, 479–499, and 516–536; these read VLLI…WSKN, LMAL…SLLH, WGWA…PLSA, GGCF…WVLV, PYFI…KLTP, and PLIF…YWVI.

The protein belongs to the OXA1/ALB3/YidC family. Type 1 subfamily. As to quaternary structure, interacts with the Sec translocase complex via SecD. Specifically interacts with transmembrane segments of nascent integral membrane proteins during membrane integration.

It localises to the cell inner membrane. Its function is as follows. Required for the insertion and/or proper folding and/or complex formation of integral membrane proteins into the membrane. Involved in integration of membrane proteins that insert both dependently and independently of the Sec translocase complex, as well as at least some lipoproteins. Aids folding of multispanning membrane proteins. This is Membrane protein insertase YidC from Xylella fastidiosa (strain M23).